We begin with the raw amino-acid sequence, 101 residues long: Small ubiquitin-related modifier 5 (101 aa).

The short motif at 17–21 is the Required for PML-NB formation element; sequence IKDED. Lys-18 participates in a covalent cross-link: Glycyl lysine isopeptide (Lys-Gly) (interchain with G-Cter in SUMO1P1/SUMO5). The Ubiquitin-like domain maps to 20-97; sequence EDIKLRVIGQ…IEVYQEQIGG (78 aa). Residue Gly-97 forms a Glycyl lysine isopeptide (Gly-Lys) (interchain with K-? in acceptor proteins) linkage. The propeptide occupies 98 to 101; it reads HSTV.

It belongs to the ubiquitin family. SUMO subfamily. Interacts with CBX4. Interacts with PIAS1. Found in a complex with SAE2. Interacts with UBE2I. Interacts with SP100. Interacts with HIPK2. Interacts with DAXX. Interacts with PML-RARA oncoprotein; PML-RARalpha outcompetes PML for SUMO1P1/SUMO5 conjugation. In terms of processing, cleavage of precursor form is necessary for function. Post-translationally, autosumoylated at Lys-18. As to expression, high expression levels in testes and peripheral blood leukocyte. Expressed also in lung, placenta, liver, spleen and thymus.

The protein resides in the nucleus. In terms of biological role, ubiquitin-like protein that can be covalently attached to proteins as a monomer or as a lysine-linked polymer. Regulates the life cycle of promyelocytic leukemia nuclear bodies (PML-NBs). PolySUMO1P1/SUMO5 conjugation on 'Lys-160' of PML facilitates recruitment of PML-NB components, which enlarges PML-NB. SUMO1P1/SUMO5 also increases polySUMO2/3 conjugation of PML, resulting in RNF4-mediated disruption of PML-NBs. This is Small ubiquitin-related modifier 5 from Homo sapiens (Human).